The following is a 107-amino-acid chain: Serine-rich and transmembrane domain-containing protein 1 (107 aa).

The helical transmembrane segment at isoleucine 43–leucine 63 threads the bilayer.

The protein localises to the membrane. This Mus musculus (Mouse) protein is Serine-rich and transmembrane domain-containing protein 1 (Sertm1).